A 172-amino-acid chain; its full sequence is Large ribosomal subunit protein uL10 (172 aa).

It belongs to the universal ribosomal protein uL10 family. In terms of assembly, part of the ribosomal stalk of the 50S ribosomal subunit. The N-terminus interacts with L11 and the large rRNA to form the base of the stalk. The C-terminus forms an elongated spine to which L12 dimers bind in a sequential fashion forming a multimeric L10(L12)X complex.

Functionally, forms part of the ribosomal stalk, playing a central role in the interaction of the ribosome with GTP-bound translation factors. In Bartonella henselae (strain ATCC 49882 / DSM 28221 / CCUG 30454 / Houston 1) (Rochalimaea henselae), this protein is Large ribosomal subunit protein uL10.